Consider the following 153-residue polypeptide: Troponin C (153 aa).

4 EF-hand domains span residues 9 to 44 (EQVQMLRKAFDMFDRDKKGYIHTNMVSTILRTLGQT), 45 to 80 (FEENDLQQLIIEIDADGSGELEFDEFLTLTARFLVE), 85 to 120 (AMQEELREAFRMYDKEGNGYIPTSALREILRALDDK), and 121 to 153 (LTEDELDEMIAEIDTDGSGTVDFDEFMEMMTGD). Residues aspartate 58, aspartate 60, serine 62, glutamate 64, and glutamate 69 each contribute to the Ca(2+) site. Ca(2+) contacts are provided by aspartate 134, aspartate 136, serine 138, threonine 140, and glutamate 145.

This sequence belongs to the troponin C family.

Its function is as follows. Troponin is the central regulatory protein of striated muscle contraction. Tn consists of three components: Tn-I which is the inhibitor of actomyosin ATPase, Tn-T which contains the binding site for tropomyosin and Tn-C. The binding of calcium to Tn-C abolishes the inhibitory action of Tn on actin filaments. The polypeptide is Troponin C (Tyrophagus putrescentiae (Mold mite)).